The sequence spans 64 residues: Ferredoxin-2 (64 aa).

4Fe-4S ferredoxin-type domains follow at residues 3–31 and 34–64; these read KYLY…MSSA and YAEV…WREE. The [4Fe-4S] cluster site is built by C12, C15, C18, and C54.

In terms of assembly, homodimer. The cofactor is [4Fe-4S] cluster.

Its function is as follows. Ferredoxins are iron-sulfur proteins that transfer electrons in a wide variety of metabolic reactions. The sequence is that of Ferredoxin-2 from Nitratidesulfovibrio vulgaris (strain DSM 19637 / Miyazaki F) (Desulfovibrio vulgaris).